The chain runs to 63 residues: Cecropin-C (63 aa).

An N-terminal signal peptide occupies residues 1–23 (MNFNKIFVFVALILAISLGQSEA). Arginine 62 is modified (arginine amide).

It belongs to the cecropin family.

Its subcellular location is the secreted. In terms of biological role, cecropins have lytic and antibacterial activity against several Gram-positive and Gram-negative bacteria. The protein is Cecropin-C (CecC) of Drosophila orena (Fruit fly).